A 369-amino-acid chain; its full sequence is Anhydro-N-acetylmuramic acid kinase (369 aa).

12-19 (GTSLDGVD) serves as a coordination point for ATP.

The protein belongs to the anhydro-N-acetylmuramic acid kinase family.

It catalyses the reaction 1,6-anhydro-N-acetyl-beta-muramate + ATP + H2O = N-acetyl-D-muramate 6-phosphate + ADP + H(+). The protein operates within amino-sugar metabolism; 1,6-anhydro-N-acetylmuramate degradation. Its pathway is cell wall biogenesis; peptidoglycan recycling. In terms of biological role, catalyzes the specific phosphorylation of 1,6-anhydro-N-acetylmuramic acid (anhMurNAc) with the simultaneous cleavage of the 1,6-anhydro ring, generating MurNAc-6-P. Is required for the utilization of anhMurNAc either imported from the medium or derived from its own cell wall murein, and thus plays a role in cell wall recycling. The polypeptide is Anhydro-N-acetylmuramic acid kinase (Escherichia coli O139:H28 (strain E24377A / ETEC)).